The following is a 200-amino-acid chain: MAKVQGDPRRFADTVLEKPFKEALARVEEAREAGLKLVEEAYKSALSAARKRLESRVEEARERLQGLKSKADLEVRTEAERVKDELVSRLIEEALAEFRRRKAGMESYRQYLERVLGSAAGESGGSVAKVLCAPEDEEIVREVLGKLGLDGVSVEAVEGIYGGVVVELAEGARLDYTVNNIIAAEEPRLRRAVKRALFEA.

The protein belongs to the V-ATPase E subunit family. As to quaternary structure, has multiple subunits with at least A(3), B(3), C, D, E, F, H, I and proteolipid K(x).

Its subcellular location is the cell membrane. Functionally, component of the A-type ATP synthase that produces ATP from ADP in the presence of a proton gradient across the membrane. This is A-type ATP synthase subunit E from Aeropyrum pernix (strain ATCC 700893 / DSM 11879 / JCM 9820 / NBRC 100138 / K1).